Here is a 209-residue protein sequence, read N- to C-terminus: Transmembrane emp24 domain-containing protein B (209 aa).

The N-terminal stretch at 1-24 (MNKTNQLINICILVTLFLIGSSSA) is a signal peptide. The Lumenal segment spans residues 25–174 (LTLQVEPKSQ…RDTSESTNAR (150 aa)). One can recognise a GOLD domain in the interval 34-119 (QECFYNFIES…AKVVTFTWAS (86 aa)). Residues 175–195 (VVWWTIAEVIVLVVMGVGQIW) form a helical membrane-spanning segment. At 196–209 (YLRKWFDNKSTGRV) the chain is on the cytoplasmic side.

It belongs to the EMP24/GP25L family.

It is found in the cytoplasmic vesicle membrane. In terms of biological role, could have a role in the budding of coatomer-coated and other species of coated vesicles. The protein is Transmembrane emp24 domain-containing protein B (empB) of Dictyostelium discoideum (Social amoeba).